Consider the following 438-residue polypeptide: Anthranilate synthase component 1 (438 aa).

Residues S45 and 220 to 222 (PYL) each bind L-tryptophan. 255–256 (GT) is a chorismate binding site. Residue E282 coordinates Mg(2+). Chorismate-binding positions include Y370, R389, 405 to 407 (GAG), and G407. Residue E420 coordinates Mg(2+).

Belongs to the anthranilate synthase component I family. Heterotetramer consisting of two non-identical subunits: a beta subunit (TrpG) and a large alpha subunit (TrpE). It depends on Mg(2+) as a cofactor.

It catalyses the reaction chorismate + L-glutamine = anthranilate + pyruvate + L-glutamate + H(+). It functions in the pathway amino-acid biosynthesis; L-tryptophan biosynthesis; L-tryptophan from chorismate: step 1/5. With respect to regulation, feedback inhibited by tryptophan. Part of a heterotetrameric complex that catalyzes the two-step biosynthesis of anthranilate, an intermediate in the biosynthesis of L-tryptophan. In the first step, the glutamine-binding beta subunit (TrpG) of anthranilate synthase (AS) provides the glutamine amidotransferase activity which generates ammonia as a substrate that, along with chorismate, is used in the second step, catalyzed by the large alpha subunit of AS (TrpE) to produce anthranilate. In the absence of TrpG, TrpE can synthesize anthranilate directly from chorismate and high concentrations of ammonia. The protein is Anthranilate synthase component 1 (trpE) of Aeropyrum pernix (strain ATCC 700893 / DSM 11879 / JCM 9820 / NBRC 100138 / K1).